A 682-amino-acid polypeptide reads, in one-letter code: Potassium-transporting ATPase ATP-binding subunit (682 aa).

The next 4 helical transmembrane spans lie at 44-64, 66-86, 233-253, and 257-277; these read VMAVVMGGTLLAAVITASGHG, AGFGWAVTAILFVTVLFGNFA, LTFLIVVASLPAIAGFVGVTL, and LLIALLVCLIPTTIGGLLPAI. Catalysis depends on aspartate 310, which acts as the 4-aspartylphosphate intermediate. ATP is bound by residues aspartate 347, glutamate 351, 377-384, and lysine 395; that span reads FTAQTRMS. Positions 518 and 522 each coordinate Mg(2+). Transmembrane regions (helical) follow at residues 588–608, 616–636, and 658–678; these read FAILPALFAAAIPSMAALNVM, AVLAALIFNALIIPALIPLAL, and GLGGVLLPFAAIKLIDLALVA.

Belongs to the cation transport ATPase (P-type) (TC 3.A.3) family. Type IA subfamily. In terms of assembly, the system is composed of three essential subunits: KdpA, KdpB and KdpC.

It localises to the cell inner membrane. The catalysed reaction is K(+)(out) + ATP + H2O = K(+)(in) + ADP + phosphate + H(+). Functionally, part of the high-affinity ATP-driven potassium transport (or Kdp) system, which catalyzes the hydrolysis of ATP coupled with the electrogenic transport of potassium into the cytoplasm. This subunit is responsible for energy coupling to the transport system and for the release of the potassium ions to the cytoplasm. The sequence is that of Potassium-transporting ATPase ATP-binding subunit from Xanthomonas campestris pv. campestris (strain ATCC 33913 / DSM 3586 / NCPPB 528 / LMG 568 / P 25).